An 886-amino-acid polypeptide reads, in one-letter code: Alanine--tRNA ligase (886 aa).

4 residues coordinate Zn(2+): His-564, His-568, Cys-676, and His-680.

Belongs to the class-II aminoacyl-tRNA synthetase family. Zn(2+) is required as a cofactor.

The protein resides in the cytoplasm. The catalysed reaction is tRNA(Ala) + L-alanine + ATP = L-alanyl-tRNA(Ala) + AMP + diphosphate. Its function is as follows. Catalyzes the attachment of alanine to tRNA(Ala) in a two-step reaction: alanine is first activated by ATP to form Ala-AMP and then transferred to the acceptor end of tRNA(Ala). Also edits incorrectly charged Ser-tRNA(Ala) and Gly-tRNA(Ala) via its editing domain. This Bartonella bacilliformis protein is Alanine--tRNA ligase.